The following is a 121-amino-acid chain: Small ribosomal subunit protein uS13 (121 aa).

Residues 92-121 (RKGLPVRGQSSKTNARTVKGPRKTVANKKK) form a disordered region. Residues 110-121 (KGPRKTVANKKK) show a composition bias toward basic residues.

Belongs to the universal ribosomal protein uS13 family. As to quaternary structure, part of the 30S ribosomal subunit. Forms a loose heterodimer with protein S19. Forms two bridges to the 50S subunit in the 70S ribosome.

Functionally, located at the top of the head of the 30S subunit, it contacts several helices of the 16S rRNA. In the 70S ribosome it contacts the 23S rRNA (bridge B1a) and protein L5 of the 50S subunit (bridge B1b), connecting the 2 subunits; these bridges are implicated in subunit movement. Contacts the tRNAs in the A and P-sites. This Mycoplasma mycoides subsp. mycoides SC (strain CCUG 32753 / NCTC 10114 / PG1) protein is Small ribosomal subunit protein uS13.